Reading from the N-terminus, the 294-residue chain is 33 kDa chaperonin (294 aa).

2 disulfides stabilise this stretch: cysteine 238-cysteine 240 and cysteine 271-cysteine 274.

The protein belongs to the HSP33 family. In terms of processing, under oxidizing conditions two disulfide bonds are formed involving the reactive cysteines. Under reducing conditions zinc is bound to the reactive cysteines and the protein is inactive.

The protein localises to the cytoplasm. Its function is as follows. Redox regulated molecular chaperone. Protects both thermally unfolding and oxidatively damaged proteins from irreversible aggregation. Plays an important role in the bacterial defense system toward oxidative stress. The protein is 33 kDa chaperonin of Staphylococcus haemolyticus (strain JCSC1435).